We begin with the raw amino-acid sequence, 842 residues long: Homeobox-leucine zipper protein REVOLUTA (842 aa).

Residues 1–20 (MEMAVANHRERSSDSMNRHL) form a disordered region. The segment covering 7-20 (NHRERSSDSMNRHL) has biased composition (basic and acidic residues). The segment at residues 22-85 (SSGKYVRYTA…NRRCRDKQRK (64 aa)) is a DNA-binding region (homeobox). Residues 90–121 (LQSVNRKLSAMNKLLMEENDRLQKQVSQLVCE) adopt a coiled-coil conformation. Positions 151–379 (DANSPAGLLS…LAQESNGEVV (229 aa)) constitute an START domain.

Belongs to the HD-ZIP homeobox family. Class III subfamily. As to quaternary structure, homodimer. Heterodimer with ZPR1, ZPR2, ZPR3 or ZPR4. Interacts with ESR1 and ESR2. Interacts with ZPR1, ZPR2, ZPR3 and ZPR4. Heterodimerization with ZPR3 prevents DNA binding by REV. In terms of tissue distribution, expressed in the interfascicular regions of stem and vascular bundles of young roots and leaves.

The protein localises to the nucleus. Its function is as follows. Probable transcription factor involved in the regulation of interfascicular fiber (cortical cells) and secondary xylem differentiation in the inflorescence stems. Required for lateral shoot meristems (LSMs) and flower meristems (FMs) initiation. May be involved in the determination of vascular patterning and organ polarity. Directly regulates the expression of AGO10, ZPR1, ZPR2, ZPR3 and ZPR4. Required to regulate adaxial-abaxial polarity and leaf axial patterning. This Arabidopsis thaliana (Mouse-ear cress) protein is Homeobox-leucine zipper protein REVOLUTA.